The chain runs to 108 residues: ATP-dependent Clp protease adapter protein ClpS (108 aa).

The protein belongs to the ClpS family. As to quaternary structure, binds to the N-terminal domain of the chaperone ClpA.

Involved in the modulation of the specificity of the ClpAP-mediated ATP-dependent protein degradation. The polypeptide is ATP-dependent Clp protease adapter protein ClpS (Leptospira borgpetersenii serovar Hardjo-bovis (strain JB197)).